Consider the following 181-residue polypeptide: NAD(P)H-quinone oxidoreductase subunit 6, chloroplastic (181 aa).

Transmembrane regions (helical) follow at residues 13–33, 35–55, 64–84, 98–118, and 152–172; these read PILY…VFFG, IIYS…LYLL, AQIL…IMLI, FGDI…IIMI, and LLPF…AITI.

Belongs to the complex I subunit 6 family. In terms of assembly, NDH is composed of at least 16 different subunits, 5 of which are encoded in the nucleus.

The protein localises to the plastid. It is found in the chloroplast thylakoid membrane. It catalyses the reaction a plastoquinone + NADH + (n+1) H(+)(in) = a plastoquinol + NAD(+) + n H(+)(out). The catalysed reaction is a plastoquinone + NADPH + (n+1) H(+)(in) = a plastoquinol + NADP(+) + n H(+)(out). In terms of biological role, NDH shuttles electrons from NAD(P)H:plastoquinone, via FMN and iron-sulfur (Fe-S) centers, to quinones in the photosynthetic chain and possibly in a chloroplast respiratory chain. The immediate electron acceptor for the enzyme in this species is believed to be plastoquinone. Couples the redox reaction to proton translocation, and thus conserves the redox energy in a proton gradient. This is NAD(P)H-quinone oxidoreductase subunit 6, chloroplastic (ndhG) from Staurastrum punctulatum (Green alga).